Reading from the N-terminus, the 368-residue chain is MPNAIVAAEQYREIFLNQHPIMDVRAPIEFTRGAFPNSTNLPLMLDSEREKVGTCYKQSGQQAAIALGHSLVNGPIKQQRIEAWASYVKANPNAYLYCFRGGLRSQLTQQWLKEACVEVPYIQGGYKALRQYLIGVIEAAPTQQPLLSLSGMTGCGKTDFLLQRKEAVDLEGIANHRGSSFGKNIDPQPTQINFENQLAIALLQHQTSDAACLLLEDESFLIGRSALPQTFYNAMQAANVLVLEESDDARLERLRNEYVHKMYSGFCERLGAEAGFAAFSDYLLQSLVSIRKRLGGKQHQELQDLMQQALDQQINQNDTSLHLVWINLLLHKYYDPMYLYQLEKKSERVLFKGSHQAMHEWLDSYQTR.

Residues 15–138 form the Rhodanese domain; the sequence is FLNQHPIMDV…LRQYLIGVIE (124 aa). Catalysis depends on C98, which acts as the S-selanylcysteine intermediate.

This sequence belongs to the SelU family. Monomer.

It catalyses the reaction 5-methylaminomethyl-2-thiouridine(34) in tRNA + selenophosphate + (2E)-geranyl diphosphate + H2O + H(+) = 5-methylaminomethyl-2-selenouridine(34) in tRNA + (2E)-thiogeraniol + phosphate + diphosphate. The enzyme catalyses 5-methylaminomethyl-2-thiouridine(34) in tRNA + (2E)-geranyl diphosphate = 5-methylaminomethyl-S-(2E)-geranyl-thiouridine(34) in tRNA + diphosphate. The catalysed reaction is 5-methylaminomethyl-S-(2E)-geranyl-thiouridine(34) in tRNA + selenophosphate + H(+) = 5-methylaminomethyl-2-(Se-phospho)selenouridine(34) in tRNA + (2E)-thiogeraniol. It carries out the reaction 5-methylaminomethyl-2-(Se-phospho)selenouridine(34) in tRNA + H2O = 5-methylaminomethyl-2-selenouridine(34) in tRNA + phosphate. Functionally, involved in the post-transcriptional modification of the uridine at the wobble position (U34) of tRNA(Lys), tRNA(Glu) and tRNA(Gln). Catalyzes the conversion of 2-thiouridine (S2U-RNA) to 2-selenouridine (Se2U-RNA). Acts in a two-step process involving geranylation of 2-thiouridine (S2U) to S-geranyl-2-thiouridine (geS2U) and subsequent selenation of the latter derivative to 2-selenouridine (Se2U) in the tRNA chain. The chain is tRNA 2-selenouridine synthase from Shewanella baltica (strain OS223).